Here is a 1872-residue protein sequence, read N- to C-terminus: Ral GTPase-activating protein subunit alpha-2 (1872 aa).

Phosphoserine occurs at positions 373, 376, and 379. Positions 446–469 (DKKDVAEEDADKLGLSETDSKEVS) are enriched in basic and acidic residues. Residues 446-481 (DKKDVAEEDADKLGLSETDSKEVSSESSGHKRSSSW) form a disordered region. Phosphoserine occurs at positions 486 and 696. 2 disordered regions span residues 711–730 (FRSATTSGAPGVEKARNTVR) and 758–849 (QPVP…TGSD). Position 715 is a phosphothreonine; by PKB (Thr715). Residues 775 to 795 (SDSSQGQKVENSQNLSSSEPK) are compositionally biased toward polar residues. Positions 796–810 (SVQESKGHVTHEHEG) are enriched in basic and acidic residues. Residues Ser819 and Ser820 each carry the phosphoserine modification. The span at 824-843 (LDLKEESQQTHGRCRERQKS) shows a compositional bias: basic and acidic residues. Ser1592 carries the phosphoserine modification. The region spanning 1634 to 1842 (LKNLDSRQCR…EERALYLEAI (209 aa)) is the Rap-GAP domain.

As to quaternary structure, component of the heterodimeric RalGAP2 complex with RALGAPB. Heterodimerization is required for activity. Highly expressed in lung, liver, testis and thymus with lower levels in brain and heart (at protein level).

The protein resides in the cytoplasm. Functionally, catalytic subunit of the heterodimeric RalGAP2 complex which acts as a GTPase activator for the Ras-like small GTPases RALA and RALB. The polypeptide is Ral GTPase-activating protein subunit alpha-2 (Rattus norvegicus (Rat)).